A 429-amino-acid polypeptide reads, in one-letter code: Probable E3 ubiquitin-protein ligase makorin-1 (429 aa).

3 C3H1-type zinc fingers span residues 18-45, 48-75, and 153-180; these read WTKH…HDLT, KPAA…HCKP, and ELRK…HGDV. The makorin-type Cys-His stretch occupies residues 181 to 208; the sequence is CDMCGLQVLHPTDSSQRSEHTKACIEAH. The segment at 226–280 adopts an RING-type zinc-finger fold; sequence CGVCMEVVFEKANPSERRFGILSNCSHCYCLKCIRKWRSAKQFESKIIKSCPECR. A C3H1-type 4 zinc finger spans residues 309 to 338; that stretch reads GMGRKPCRYFDEGRGICPFGANCFYKHAFP. Positions 343–362 are disordered; the sequence is EEAQPQRRQTGSSSRNRNSR. The span at 348–358 shows a compositional bias: low complexity; that stretch reads QRRQTGSSSRN.

It carries out the reaction S-ubiquitinyl-[E2 ubiquitin-conjugating enzyme]-L-cysteine + [acceptor protein]-L-lysine = [E2 ubiquitin-conjugating enzyme]-L-cysteine + N(6)-ubiquitinyl-[acceptor protein]-L-lysine.. It participates in protein modification; protein ubiquitination. Its function is as follows. E3 ubiquitin ligase catalyzing the covalent attachment of ubiquitin moieties onto substrate proteins. This chain is Probable E3 ubiquitin-protein ligase makorin-1, found in Takifugu rubripes (Japanese pufferfish).